The following is a 904-amino-acid chain: Putative pentatricopeptide repeat-containing protein At1g19290 (904 aa).

19 PPR repeats span residues 154-188 (SPTV…GRIP), 189-223 (SLLS…EVSP), 224-254 (DVFT…TESS), 260-294 (NVVT…GVSR), 295-329 (NVVT…KLVA), 330-364 (DQHM…GVRT), 365-399 (NTTI…SLKP), 400-434 (DHHT…EVVP), 435-469 (TVMT…GVNA), 470-504 (DEIS…GLLT), 505-539 (DTIT…RCKP), 540-574 (AVQT…GIFP), 575-609 (TIEM…GLTP), 610-644 (TVAT…GITL), 645-679 (NVNI…DLLL), 718-753 (NNIV…RFIP), 754-788 (DEYT…GIIP), 789-823 (NIVT…GITP), and 824-858 (NAIT…GLVR).

The protein belongs to the PPR family. P subfamily.

The polypeptide is Putative pentatricopeptide repeat-containing protein At1g19290 (Arabidopsis thaliana (Mouse-ear cress)).